A 2032-amino-acid polypeptide reads, in one-letter code: Transient receptor potential channel (2032 aa).

Over residues 129–139 (KKTRKHRRRRS) the composition is skewed to basic residues. 5 disordered regions span residues 129-162 (KKTR…GHAI), 197-223 (QSKG…AVPT), 831-860 (KKAM…MGGV), 912-945 (ANPM…GSQT), and 1120-1211 (AAEH…EAGN). Polar residues-rich tracts occupy residues 839–855 (SRPS…QSTE), 935–945 (SLTSASDGSQT), and 1120–1129 (AAEHQNDMNY). Over residues 1130-1149 (SSSSSSSSSSSSSSSSSDSS) the composition is skewed to low complexity. Residues 1171–1185 (TSQGSAQSLNITSLF) are compositionally biased toward polar residues. A run of 5 helical transmembrane segments spans residues 1310–1330 (FWSW…TLLV), 1332–1352 (TPPR…AFGL), 1374–1394 (VCSF…VGFF), 1439–1459 (MIQN…SFGL), and 1535–1555 (LMTF…IAIF). Disordered regions lie at residues 1753–1779 (GTDP…RIRR), 1853–1909 (HPER…SRDQ), 1935–1982 (EEED…EEVD), and 1999–2032 (LNEE…CSDV). Over residues 1935 to 1947 (EEEDEEEDDEEDD) the composition is skewed to acidic residues. A compositionally biased stretch (basic residues) spans 1951-1962 (RHHIHPRRKSSR). Over residues 2016-2032 (SPSSSRADLTSQKCSDV) the composition is skewed to polar residues.

This sequence belongs to the transient receptor (TC 1.A.4) family. LTrpC subfamily. Gonads.

It is found in the membrane. Required for initiation and continuation of postembryonic mitotic cell divisions of gonadal cells Z1 and Z4. Zygotic expression is necessary for hermaphrodite fertility. May be a cation channel. This is Transient receptor potential channel (gon-2) from Caenorhabditis elegans.